Reading from the N-terminus, the 44-residue chain is Pandinin-1 (44 aa).

In terms of tissue distribution, expressed by the venom gland.

The protein resides in the secreted. It localises to the target cell membrane. Its function is as follows. Disrupts cell membranes through formation of pores. Strong antimicrobial activity against Gram-positive bacteria B.subtilis, S.epidermidis, E.faecalis and S.aureus. Less active against Gram-negative bacteria P.aeruginosa and E.coli. Has no antifungal or hemolytic activity. The chain is Pandinin-1 from Pandinus imperator (Emperor scorpion).